A 709-amino-acid polypeptide reads, in one-letter code: D-(-)-3-hydroxybutyrate oligomer hydrolase (709 aa).

The first 26 residues, 1–26 (MTVFKTAPLLIAALAASSCGGGGSGA), serve as a signal peptide directing secretion. The segment at 58-77 (GLGRSGLQDDSPPGYAGSQP) is disordered. Serine 305 serves as the catalytic Charge relay system.

It belongs to the D-(-)-3-hydroxybutyrate oligomer hydrolase family.

Its subcellular location is the secreted. The catalysed reaction is (3R)-hydroxybutanoate dimer + H2O = 2 (R)-3-hydroxybutanoate + H(+). The protein operates within lipid metabolism; butanoate metabolism. In terms of biological role, participates in the degradation of poly-3-hydroxybutyrate (PHB). It works downstream of poly(3-hydroxybutyrate) depolymerase, hydrolyzing D(-)-3-hydroxybutyrate oligomers of various length (3HB-oligomers) into 3HB-monomers. This is D-(-)-3-hydroxybutyrate oligomer hydrolase from Paracidovorax citrulli (strain AAC00-1) (Acidovorax citrulli).